The primary structure comprises 224 residues: Serum amyloid P-component (224 aa).

A signal peptide spans M1 to A19. The 201-residue stretch at R24 to G224 folds into the Pentraxin (PTX) domain. N-linked (GlcNAc...) asparagine glycosylation is present at N51. C55 and C114 are oxidised to a cystine. Ca(2+) contacts are provided by D77, N78, E155, Q156, and D157. N-linked (GlcNAc...) asparagine glycosylation occurs at N166. Q167 contributes to the Ca(2+) binding site.

Belongs to the pentraxin family. Homopentamer. Pentraxin (or pentaxin) have a discoid arrangement of 5 non-covalently bound subunits. Ca(2+) serves as cofactor.

The protein localises to the secreted. The polypeptide is Serum amyloid P-component (APCS) (Bos taurus (Bovine)).